The following is a 172-amino-acid chain: ATP synthase subunit b (172 aa).

The helical transmembrane segment at 17–37 threads the bilayer; the sequence is IVFSAIVLAIVLPFFWWFVIP.

This sequence belongs to the ATPase B chain family. As to quaternary structure, F-type ATPases have 2 components, F(1) - the catalytic core - and F(0) - the membrane proton channel. F(1) has five subunits: alpha(3), beta(3), gamma(1), delta(1), epsilon(1). F(0) has three main subunits: a(1), b(2) and c(10-14). The alpha and beta chains form an alternating ring which encloses part of the gamma chain. F(1) is attached to F(0) by a central stalk formed by the gamma and epsilon chains, while a peripheral stalk is formed by the delta and b chains.

It localises to the cell membrane. Functionally, f(1)F(0) ATP synthase produces ATP from ADP in the presence of a proton or sodium gradient. F-type ATPases consist of two structural domains, F(1) containing the extramembraneous catalytic core and F(0) containing the membrane proton channel, linked together by a central stalk and a peripheral stalk. During catalysis, ATP synthesis in the catalytic domain of F(1) is coupled via a rotary mechanism of the central stalk subunits to proton translocation. In terms of biological role, component of the F(0) channel, it forms part of the peripheral stalk, linking F(1) to F(0). This Tropheryma whipplei (strain TW08/27) (Whipple's bacillus) protein is ATP synthase subunit b.